Reading from the N-terminus, the 114-residue chain is MSTAASSRMRVFSGRSTRTYPRAVPTYHCQPCRRVPSRPCRPVRALDTASKHARSNRATAAQKEKQGHGGSAQGARNPASHRHLHQRTRGDQVPSEPPSRPRKDHASQSPDTAY.

The segment at 1–114 (MSTAASSRMR…HASQSPDTAY (114 aa)) is disordered. Positions 32–43 (CRRVPSRPCRPV) are enriched in low complexity.

This is an uncharacterized protein from Human adenovirus B serotype 7 (HAdV-7).